Reading from the N-terminus, the 280-residue chain is Transcription factor ovo-like homolog lin-48 (280 aa).

C2H2-type zinc fingers lie at residues Leu133 to His155, Tyr161 to His183, Tyr189 to His212, and Phe228 to His251.

It localises to the nucleus. Functionally, transcription factor. Involved in development of the hindgut, the male tail, and the excretory duct cell. Involved in modulating function of excretory duct cells. Plays a role in left/right patterning of cell fates in the hindgut. In Caenorhabditis elegans, this protein is Transcription factor ovo-like homolog lin-48.